A 183-amino-acid chain; its full sequence is Large ribosomal subunit protein uL5 (183 aa).

The protein belongs to the universal ribosomal protein uL5 family. In terms of assembly, part of the 50S ribosomal subunit; part of the 5S rRNA/L5/L18/L25 subcomplex. Contacts the 5S rRNA and the P site tRNA. Forms a bridge to the 30S subunit in the 70S ribosome.

This is one of the proteins that bind and probably mediate the attachment of the 5S RNA into the large ribosomal subunit, where it forms part of the central protuberance. In the 70S ribosome it contacts protein S13 of the 30S subunit (bridge B1b), connecting the 2 subunits; this bridge is implicated in subunit movement. Contacts the P site tRNA; the 5S rRNA and some of its associated proteins might help stabilize positioning of ribosome-bound tRNAs. The sequence is that of Large ribosomal subunit protein uL5 from Fusobacterium nucleatum subsp. nucleatum (strain ATCC 25586 / DSM 15643 / BCRC 10681 / CIP 101130 / JCM 8532 / KCTC 2640 / LMG 13131 / VPI 4355).